The following is a 302-amino-acid chain: Glutaminase (302 aa).

Residues S61, N111, E155, N162, Y186, Y238, and V256 each contribute to the substrate site.

The protein belongs to the glutaminase family. Homotetramer.

It carries out the reaction L-glutamine + H2O = L-glutamate + NH4(+). The protein is Glutaminase of Pseudomonas paraeruginosa (strain DSM 24068 / PA7) (Pseudomonas aeruginosa (strain PA7)).